The primary structure comprises 366 residues: RNA 3'-terminal phosphate cyclase (366 aa).

ATP contacts are provided by Gln104, Pro131, Tyr294, Asp297, Gln298, and His320. The Tele-AMP-histidine intermediate role is filled by His320.

The protein belongs to the RNA 3'-terminal cyclase family. Type 1 subfamily. Detected in retinal ganglion cells (RGCs) (at protein level).

The protein localises to the nucleus. It localises to the nucleoplasm. It carries out the reaction a 3'-end 3'-phospho-ribonucleotide-RNA + ATP = a 3'-end 2',3'-cyclophospho-ribonucleotide-RNA + AMP + diphosphate. Its function is as follows. Catalyzes the conversion of 3'-phosphate to a 2',3'-cyclic phosphodiester at the end of RNA. The mechanism of action of the enzyme occurs in 3 steps: (A) adenylation of the enzyme by ATP; (B) transfer of adenylate to an RNA-N3'P to produce RNA-N3'PP5'A; (C) and attack of the adjacent 2'-hydroxyl on the 3'-phosphorus in the diester linkage to produce the cyclic end product. Likely functions in some aspects of cellular RNA processing. Function plays an important role in regulating axon regeneration by inhibiting central nervous system (CNS) axon regeneration following optic nerve injury. This is RNA 3'-terminal phosphate cyclase from Mus musculus (Mouse).